Here is a 543-residue protein sequence, read N- to C-terminus: MDETIGMKKEFHDISVGDIEVGESAPVTEDDKMLLNLGYKQEFKREFSLLAVFGQSFGSMGLCPSLVGSMAFSMNCGAGGMVWSWFVGATCLLPIAFALSELASSMPTSGSLYFWTAYLSPPKYRAFLSWFLGYVLALAYSTGFASTIYAAAGLVQATASVANPSYAPTKYEEYGIYVALSFACSALIVLPTKFLARFSSFNVVFQICTILIFIISLAASSTSETRNTGSYIFGNFENYSGWTNMGWSFILCFTTPVWVLSGFESCATIVEEAKNASKAAPIAIISSLTVSLFMGFCIMITIAGTMGHDFSSILNTPYGEPVSQVLYNNLGKRGAVGVSAVLIIALCFNCSALCLASSREIFAFARDKGLPGSWIFRKLTPGGIPLNAILLVNLYTIIVGLLMLVNVTAISSIFNLAIIAFFISYSLPLVCRLLFNRLNPGKFYCGKFSKPISIVAVAWLWFMALMLLFPSYQNPNKVEMNWAIVVLGFTVFFCVGYYYLPKYGGKTFFKGPVKTVDENVTEGVTVDFQADHVSKEDDGKSYN.

Helical transmembrane passes span phenylalanine 47–valine 67, glycine 79–leucine 99, alanine 126–serine 146, isoleucine 176–alanine 196, phenylalanine 198–alanine 218, and phenylalanine 249–isoleucine 269. Asparagine 275 carries an N-linked (GlcNAc...) asparagine glycan. 3 helical membrane-spanning segments follow: residues isoleucine 282–isoleucine 302, alanine 335–leucine 355, and isoleucine 384–leucine 404. Asparagine 406 carries an N-linked (GlcNAc...) asparagine glycan. 3 helical membrane passes run isoleucine 410–valine 430, isoleucine 452–tyrosine 472, and methionine 480–leucine 500. An N-linked (GlcNAc...) asparagine glycan is attached at asparagine 519.

This sequence belongs to the amino acid-polyamine-organocation (APC) superfamily.

The protein resides in the membrane. This is an uncharacterized protein from Schizosaccharomyces pombe (strain 972 / ATCC 24843) (Fission yeast).